The primary structure comprises 305 residues: UDP-3-O-acyl-N-acetylglucosamine deacetylase (305 aa).

Zn(2+) is bound by residues His79, His238, and Asp242. Catalysis depends on His265, which acts as the Proton donor.

This sequence belongs to the LpxC family. The cofactor is Zn(2+).

The catalysed reaction is a UDP-3-O-[(3R)-3-hydroxyacyl]-N-acetyl-alpha-D-glucosamine + H2O = a UDP-3-O-[(3R)-3-hydroxyacyl]-alpha-D-glucosamine + acetate. Its pathway is glycolipid biosynthesis; lipid IV(A) biosynthesis; lipid IV(A) from (3R)-3-hydroxytetradecanoyl-[acyl-carrier-protein] and UDP-N-acetyl-alpha-D-glucosamine: step 2/6. Catalyzes the hydrolysis of UDP-3-O-myristoyl-N-acetylglucosamine to form UDP-3-O-myristoylglucosamine and acetate, the committed step in lipid A biosynthesis. The sequence is that of UDP-3-O-acyl-N-acetylglucosamine deacetylase from Pectobacterium atrosepticum (strain SCRI 1043 / ATCC BAA-672) (Erwinia carotovora subsp. atroseptica).